Consider the following 510-residue polypeptide: 2,3-bisphosphoglycerate-independent phosphoglycerate mutase (510 aa).

The Mn(2+) site is built by Asp-12 and Ser-62. The active-site Phosphoserine intermediate is Ser-62. Substrate contacts are provided by residues His-123, 153-154 (RD), Arg-185, Arg-191, 260-263 (RPDR), and Lys-335. 5 residues coordinate Mn(2+): Asp-402, His-406, Asp-443, His-444, and His-461.

It belongs to the BPG-independent phosphoglycerate mutase family. In terms of assembly, monomer. Mn(2+) is required as a cofactor.

It carries out the reaction (2R)-2-phosphoglycerate = (2R)-3-phosphoglycerate. It functions in the pathway carbohydrate degradation; glycolysis; pyruvate from D-glyceraldehyde 3-phosphate: step 3/5. Functionally, catalyzes the interconversion of 2-phosphoglycerate and 3-phosphoglycerate. This is 2,3-bisphosphoglycerate-independent phosphoglycerate mutase from Listeria welshimeri serovar 6b (strain ATCC 35897 / DSM 20650 / CCUG 15529 / CIP 8149 / NCTC 11857 / SLCC 5334 / V8).